Here is a 424-residue protein sequence, read N- to C-terminus: Galacturonokinase (424 aa).

S2 carries the post-translational modification N-acetylserine. Residue 146–155 (DSSGLSSSAA) participates in ATP binding. D197 (proton acceptor) is an active-site residue.

The protein belongs to the GHMP kinase family. Mg(2+) serves as cofactor. It depends on Mn(2+) as a cofactor. Ca(2+) is required as a cofactor. Expressed in roots, stems, leaves, flowers and young siliques. Higher expression in the elongating middle stem region than in the lower or upper stem region.

The catalysed reaction is D-galacturonate + ATP = 1-phospho-alpha-D-galacturonate + ADP + H(+). With respect to regulation, inhibited by EDTA and ADP. In terms of biological role, sugar-1-kinase with a strict substrate specificity for the alpha-anomeric configuration of D-galacturonic acid (D-GalA) and ATP. Involved in the biosynthesis of UDP-galacturonic acid (UDP-GalA) from the salvaged GalA that is released during growth-dependent cell wall restructuring. This chain is Galacturonokinase (GALAK), found in Arabidopsis thaliana (Mouse-ear cress).